Reading from the N-terminus, the 127-residue chain is RutC family protein PYRAB12510 (127 aa).

This sequence belongs to the RutC family.

In Pyrococcus abyssi (strain GE5 / Orsay), this protein is RutC family protein PYRAB12510.